We begin with the raw amino-acid sequence, 311 residues long: Porphobilinogen deaminase (311 aa).

Cys-241 carries the S-(dipyrrolylmethanemethyl)cysteine modification.

The protein belongs to the HMBS family. In terms of assembly, monomer. Requires dipyrromethane as cofactor.

The enzyme catalyses 4 porphobilinogen + H2O = hydroxymethylbilane + 4 NH4(+). It functions in the pathway porphyrin-containing compound metabolism; protoporphyrin-IX biosynthesis; coproporphyrinogen-III from 5-aminolevulinate: step 2/4. Tetrapolymerization of the monopyrrole PBG into the hydroxymethylbilane pre-uroporphyrinogen in several discrete steps. The protein is Porphobilinogen deaminase (hemC) of Halalkalibacterium halodurans (strain ATCC BAA-125 / DSM 18197 / FERM 7344 / JCM 9153 / C-125) (Bacillus halodurans).